Consider the following 1100-residue polypeptide: SLIT-ROBO Rho GTPase-activating protein 2 (1100 aa).

The F-BAR domain occupies 19 to 324 (TQVKEIRAQL…AAENLEANSD (306 aa)). Coiled-coil stretches lie at residues 170–201 (YNMD…HEEK) and 363–400 (GELI…IQDM). Basic and acidic residues predominate over residues 181-203 (LKEAEKQEEKQMSRSVRHEEKQT). A disordered region spans residues 181–210 (LKEAEKQEEKQMSRSVRHEEKQTPRSPDSL). In terms of domain architecture, Rho-GAP spans 496–680 (VRKQEAIQII…TIIIHHESIF (185 aa)). Residues 738–797 (SDPIEAIARFDYSGRTNRELSFKKGASLLLYSRASDDWWEGRHNGTEGLVPHQYIVVQDM) enclose the SH3 domain. Disordered stretches follow at residues 800–835 (GYAG…TGGH) and 852–938 (EATS…PLDP). The span at 807 to 823 (PKADLEGSHDSVEEKVS) shows a compositional bias: basic and acidic residues. Residues 919-932 (RKSTPTGRSKSFSN) are compositionally biased toward polar residues. Residues 945-972 (EHSSQDIEATMNTALSELRELERQSNVK) adopt a coiled-coil conformation. The disordered stretch occupies residues 986–1100 (KSGGTSEPSS…PPPTDKSCPV (115 aa)). Composition is skewed to polar residues over residues 987 to 997 (SGGTSEPSSPL) and 1008 to 1049 (SQHP…GSTF). Over residues 1067–1081 (SSSAGGSPAMGSPTT) the composition is skewed to low complexity. The span at 1082–1094 (TIPPTPPPPPPPT) shows a compositional bias: pro residues.

Its subcellular location is the cell membrane. The protein resides in the cell projection. The protein localises to the dendritic spine. It localises to the postsynaptic density. It is found in the postsynaptic cell membrane. Its subcellular location is the lamellipodium. The protein resides in the cytoplasmic vesicle. The protein localises to the phagosome. It localises to the nucleus. It is found in the cytoplasm. Its subcellular location is the cytosol. Its function is as follows. Postsynaptic RAC1 GTPase activating protein (GAP) that plays a key role in neuronal morphogenesis and migration mainly during development of the cerebral cortex. Regulates excitatory and inhibitory synapse maturation and density in cortical pyramidal neurons. Mechanistically, acts by binding and deforming membranes, thereby regulating actin dynamics to regulate cell migration and differentiation. The sequence is that of SLIT-ROBO Rho GTPase-activating protein 2 (srgap2) from Danio rerio (Zebrafish).